Reading from the N-terminus, the 646-residue chain is Long-chain fatty acid transport protein 1 (646 aa).

The Extracellular portion of the chain corresponds to 1–13; the sequence is MRAPGAGSASVAS. The chain crosses the membrane as a helical span at residues 14 to 34; it reads LVLLWLLGLPWTWSTAAALGV. Residues 35-646 are Cytoplasmic-facing; the sequence is YVGGGGWRFL…TRICSGAFAL (612 aa). Positions 191-475 are sufficient for oligomerization; the sequence is EMSGELGKSL…YISESATSKK (285 aa). An AMP-binding site is contributed by 246–257; that stretch reads YIYTSGTTGLPK.

This sequence belongs to the ATP-dependent AMP-binding enzyme family. Self-associates. May function as a homodimer. Interacts with EPRS1; mediates the translocation of SLC27A1 from the cytoplasm to the plasma membrane thereby increasing the uptake of long-chain fatty acids. Interacts with DGAT2 and this interaction is enhanced in the presence of ZFYVE1.

It is found in the cell membrane. It localises to the endomembrane system. The protein resides in the cytoplasm. It catalyses the reaction a fatty acid(in) = a fatty acid(out). It carries out the reaction (9Z)-octadecenoate(out) = (9Z)-octadecenoate(in). The catalysed reaction is hexadecanoate(out) = hexadecanoate(in). The enzyme catalyses (5Z,8Z,11Z,14Z)-eicosatetraenoate(out) = (5Z,8Z,11Z,14Z)-eicosatetraenoate(in). It catalyses the reaction (9Z,12Z)-octadecadienoate(out) = (9Z,12Z)-octadecadienoate(in). It carries out the reaction a long-chain fatty acid + ATP + CoA = a long-chain fatty acyl-CoA + AMP + diphosphate. The catalysed reaction is (5Z,8Z,11Z,14Z)-eicosatetraenoate + ATP + CoA = (5Z,8Z,11Z,14Z)-eicosatetraenoyl-CoA + AMP + diphosphate. The enzyme catalyses a very long-chain fatty acid + ATP + CoA = a very long-chain fatty acyl-CoA + AMP + diphosphate. It catalyses the reaction tetracosanoate + ATP + CoA = tetracosanoyl-CoA + AMP + diphosphate. With respect to regulation, inhibited by Triacsin C. In terms of biological role, mediates the import of long-chain fatty acids (LCFA) into the cell by facilitating their transport at the plasma membrane. Also functions as an acyl-CoA ligase catalyzing the ATP-dependent formation of fatty acyl-CoA using LCFA and very-long-chain fatty acids (VLCFA) as substrates, which prevents fatty acid efflux from cells and might drive more fatty acid uptake. May act directly as a bona fide transporter, or alternatively, in a cytoplasmic or membrane-associated multimeric protein complex to trap and draw fatty acids towards accumulation. Plays a pivotal role in regulating available LCFA substrates from exogenous sources in tissues undergoing high levels of beta-oxidation or triglyceride synthesis. May be involved in regulation of cholesterol metabolism. Probably involved in fatty acid transport across the blood barrier. This Bos taurus (Bovine) protein is Long-chain fatty acid transport protein 1.